The following is a 270-amino-acid chain: Glutamate racemase (270 aa).

Substrate-binding positions include 15 to 16 (DS) and 47 to 48 (YG). The Proton donor/acceptor role is filled by Cys-78. 79–80 (NT) provides a ligand contact to substrate. Catalysis depends on Cys-189, which acts as the Proton donor/acceptor. Residue 190 to 191 (TH) participates in substrate binding.

This sequence belongs to the aspartate/glutamate racemases family.

The enzyme catalyses L-glutamate = D-glutamate. It participates in cell wall biogenesis; peptidoglycan biosynthesis. Its function is as follows. Provides the (R)-glutamate required for cell wall biosynthesis. The sequence is that of Glutamate racemase from Syntrophus aciditrophicus (strain SB).